Reading from the N-terminus, the 488-residue chain is 3-octaprenyl-4-hydroxybenzoate carboxy-lyase (488 aa).

Mn(2+) is bound at residue Asn172. Residues Ile175 to Arg177, Arg189 to Leu191, and Arg194 to Gly195 each bind prenylated FMN. Glu238 provides a ligand contact to Mn(2+). Asp287 functions as the Proton donor in the catalytic mechanism.

It belongs to the UbiD family. Homohexamer. The cofactor is prenylated FMN. It depends on Mn(2+) as a cofactor.

It localises to the cell membrane. The catalysed reaction is a 4-hydroxy-3-(all-trans-polyprenyl)benzoate + H(+) = a 2-(all-trans-polyprenyl)phenol + CO2. The protein operates within cofactor biosynthesis; ubiquinone biosynthesis. Its function is as follows. Catalyzes the decarboxylation of 3-octaprenyl-4-hydroxy benzoate to 2-octaprenylphenol, an intermediate step in ubiquinone biosynthesis. The protein is 3-octaprenyl-4-hydroxybenzoate carboxy-lyase of Pseudomonas fluorescens (strain SBW25).